The following is a 379-amino-acid chain: Oxysterol-binding protein-related protein 4C (379 aa).

The protein belongs to the OSBP family. As to expression, expressed in flowers.

Functionally, may be involved in the transport of sterols. The chain is Oxysterol-binding protein-related protein 4C (ORP4C) from Arabidopsis thaliana (Mouse-ear cress).